Here is a 209-residue protein sequence, read N- to C-terminus: Uracil phosphoribosyltransferase (209 aa).

Residues Arg-79, Arg-104, and 131-139 (DPMLATGNS) contribute to the 5-phospho-alpha-D-ribose 1-diphosphate site. Uracil is bound by residues Ile-194 and 199–201 (GDA). 5-phospho-alpha-D-ribose 1-diphosphate is bound at residue Asp-200.

Belongs to the UPRTase family. It depends on Mg(2+) as a cofactor.

It catalyses the reaction UMP + diphosphate = 5-phospho-alpha-D-ribose 1-diphosphate + uracil. The protein operates within pyrimidine metabolism; UMP biosynthesis via salvage pathway; UMP from uracil: step 1/1. With respect to regulation, allosterically activated by GTP. Functionally, catalyzes the conversion of uracil and 5-phospho-alpha-D-ribose 1-diphosphate (PRPP) to UMP and diphosphate. The polypeptide is Uracil phosphoribosyltransferase (Agrobacterium fabrum (strain C58 / ATCC 33970) (Agrobacterium tumefaciens (strain C58))).